We begin with the raw amino-acid sequence, 262 residues long: ELL-associated factor 2 (262 aa).

The segment at 17–104 (LKLGESFEKQ…TGECRLEKLS (88 aa)) is necessary for interaction with ELL. The span at 124 to 144 (LEQQQQQMWNPPRTSNLVQHS) shows a compositional bias: polar residues. 2 disordered regions span residues 124–154 (LEQQ…SPTS) and 170–232 (MDQM…ADTT). 3 positions are modified to phosphoserine: Ser-146, Ser-151, and Ser-154. The span at 174-192 (SSCDSSSDSRSSSSSSSED) shows a compositional bias: low complexity. A necessary for transactivation activity region spans residues 177–262 (DSSSDSRSSS…LSESDSDSED (86 aa)). The interval 248-262 (RSDLQLSESDSDSED) is necessary for interaction with TCEA1 and transactivation activity.

It belongs to the EAF family. In terms of assembly, component of the super elongation complex (SEC), at least composed of EAF1, EAF2, CDK9, MLLT3/AF9, AFF (AFF1 or AFF4), the P-TEFb complex and ELL (ELL, ELL2 or ELL3). Interacts with ELL, ELL2 and TCEA1.

It is found in the nucleus speckle. In terms of biological role, acts as a transcriptional transactivator of ELL, ELL2 and TCEA1 elongation activities. Potent inducer of apoptosis in prostatic and non-prostatic cell lines. This chain is ELL-associated factor 2 (Eaf2), found in Rattus norvegicus (Rat).